The following is a 72-amino-acid chain: Exodeoxyribonuclease 7 small subunit (72 aa).

Belongs to the XseB family. As to quaternary structure, heterooligomer composed of large and small subunits.

It localises to the cytoplasm. It catalyses the reaction Exonucleolytic cleavage in either 5'- to 3'- or 3'- to 5'-direction to yield nucleoside 5'-phosphates.. In terms of biological role, bidirectionally degrades single-stranded DNA into large acid-insoluble oligonucleotides, which are then degraded further into small acid-soluble oligonucleotides. The sequence is that of Exodeoxyribonuclease 7 small subunit from Chlamydia trachomatis serovar D (strain ATCC VR-885 / DSM 19411 / UW-3/Cx).